The primary structure comprises 259 residues: Expansin-B6 (259 aa).

The signal sequence occupies residues 1–24; that stretch reads MASSSHRYFALLALFAVSLKFCYC. Asn-26 carries an N-linked (GlcNAc...) asparagine glycan. Residues 52 to 160 enclose the Expansin-like EG45 domain; it reads GGACGFAVAN…IRVECLYRRT (109 aa). Intrachain disulfides connect Cys-55-Cys-82, Cys-85-Cys-155, and Cys-90-Cys-96. One can recognise an Expansin-like CBD domain in the interval 173 to 254; it reads YYISFVVEYE…NWKPNETYRS (82 aa). Asn-249 is a glycosylation site (N-linked (GlcNAc...) asparagine).

This sequence belongs to the expansin family. Expansin B subfamily.

The protein localises to the secreted. It localises to the cell wall. The protein resides in the membrane. May cause loosening and extension of plant cell walls by disrupting non-covalent bonding between cellulose microfibrils and matrix glucans. The protein is Expansin-B6 of Arabidopsis thaliana (Mouse-ear cress).